A 146-amino-acid polypeptide reads, in one-letter code: Hut operon positive regulatory protein (146 aa).

This sequence belongs to the HutP family. Homohexamer.

Functionally, antiterminator that binds to cis-acting regulatory sequences on the mRNA in the presence of histidine, thereby suppressing transcription termination and activating the hut operon for histidine utilization. This chain is Hut operon positive regulatory protein, found in Bacillus cereus (strain ZK / E33L).